The primary structure comprises 142 residues: Hemoglobin subunit alpha-4 (142 aa).

Serine 1 carries the post-translational modification N-acetylserine. One can recognise a Globin domain in the interval 1–142; it reads SLSAKDKANV…LALALAEKYR (142 aa). O2 is bound at residue histidine 59. Histidine 88 is a binding site for heme b.

This sequence belongs to the globin family. As to quaternary structure, heterotetramer of two alpha chains and two beta chains. In terms of tissue distribution, red blood cells.

Functionally, involved in oxygen transport from gills to the various peripheral tissues. In Oncorhynchus mykiss (Rainbow trout), this protein is Hemoglobin subunit alpha-4 (hba4).